The primary structure comprises 172 residues: uncharacterized protein (172 aa).

Belongs to the archaeal NMN adenylyltransferase family.

This is an uncharacterized protein from Aeropyrum pernix (strain ATCC 700893 / DSM 11879 / JCM 9820 / NBRC 100138 / K1).